Reading from the N-terminus, the 853-residue chain is Leucine-rich repeat and death domain-containing protein 1 (853 aa).

The disordered stretch occupies residues 1 to 78; sequence MSEDGSNVEP…EEKNTGIPFS (78 aa). Acidic residues predominate over residues 19–31; the sequence is LEEPGSEISDLLD. The segment covering 56 to 65 has biased composition (polar residues); it reads QSAASFTSQL. LRR repeat units lie at residues 133–157, 159–180, 183–204, 206–227, 229–251, 252–274, 275–297, 298–319, 321–342, 344–365, 367–388, 390–411, 413–435, 436–457, 459–481, 482–503, 505–527, 528–549, 551–573, 574–596, 597–618, 620–641, 646–668, 669–690, 692–713, and 715–736; these read MKSDNFTVNLDAKGLQEFPVDIVKV, YVKYLYLDKNQIKNFQGIDPGD, GLEILSLQENGLSSIPLEIQLF, NLKILNASYNEISQIPKELLQL, NMRQLLLNSNHIDTLPSGLEHLR, YLETLSLGKNMLTYIPDSLSSLK, NLRILNLEYNQLTIFSKSLCFLP, KLNSLNLTGNMIGSLPKEVREL, NLESLLMDHNKLTFLAVEIFQL, KIKELHLADNKLEAISPKIENF, ELRLLNLDKNLLQSIPKKISHC, NLESLSLSDNNIEELPKKIRKL, NLRQLHVNRNKMITMTEEISHLS, NIHILEFSGNQITHVPIEIKNC, KITRVELNYNNIMYFPVGLCALQ, SLDYLSFNGNYISEIPVDMSFS, QLLHLELNRNKLTVFSKHLCSLT, NLEYLDLAKNQIMTIPSCISAM, SLHVLILSDNKFESFPKELCSLK, NLRVLDISENKLQKIPLEISKLK, RIQKLNLSNNIFTNFPVELCQL, TLEELNISQTSGKKLTRLPEEV, QLKILNISNNAIKDIPKNIGELR, SLVSFYASNNQISSLPSSFLSL, VLQSLDLRGNNMTALPSGIYKL, and SLKEINFDDNPLMRPPMEICKG. Residues 757 to 845 form the Death domain; that stretch reads LEKIFNIVAN…DIMDKITALN (89 aa).

The sequence is that of Leucine-rich repeat and death domain-containing protein 1 (Lrrd1) from Mus musculus (Mouse).